The sequence spans 521 residues: Bifunctional purine biosynthesis protein PurH (521 aa).

Residues 1 to 145 (MIKQALISVS…KNHRDVTVVV (145 aa)) form the MGS-like domain.

Belongs to the PurH family.

It catalyses the reaction (6R)-10-formyltetrahydrofolate + 5-amino-1-(5-phospho-beta-D-ribosyl)imidazole-4-carboxamide = 5-formamido-1-(5-phospho-D-ribosyl)imidazole-4-carboxamide + (6S)-5,6,7,8-tetrahydrofolate. The enzyme catalyses IMP + H2O = 5-formamido-1-(5-phospho-D-ribosyl)imidazole-4-carboxamide. Its pathway is purine metabolism; IMP biosynthesis via de novo pathway; 5-formamido-1-(5-phospho-D-ribosyl)imidazole-4-carboxamide from 5-amino-1-(5-phospho-D-ribosyl)imidazole-4-carboxamide (10-formyl THF route): step 1/1. It participates in purine metabolism; IMP biosynthesis via de novo pathway; IMP from 5-formamido-1-(5-phospho-D-ribosyl)imidazole-4-carboxamide: step 1/1. This Burkholderia ambifaria (strain MC40-6) protein is Bifunctional purine biosynthesis protein PurH.